We begin with the raw amino-acid sequence, 115 residues long: UPF0738 protein SACOL1009 (115 aa).

The protein belongs to the UPF0738 family.

The sequence is that of UPF0738 protein SACOL1009 from Staphylococcus aureus (strain COL).